The primary structure comprises 157 residues: WPP domain-containing protein 3 (157 aa).

Over residues 1–20 (MAETADTINTTVSTPQPQLE) the composition is skewed to polar residues. The segment at 1 to 41 (MAETADTINTTVSTPQPQLESRSDETSCLQKHRSDATSEVT) is disordered. Positions 32 to 41 (HRSDATSEVT) are enriched in basic and acidic residues. A WPP; degenerate region spans residues 37–138 (TSEVTKEEKS…IESAEVRFKA (102 aa)).

As to expression, expressed in roots, stems and leaves.

Its subcellular location is the cytoplasm. It is found in the nucleus. In terms of biological role, regulates the mitotic activity in roots. This Arabidopsis thaliana (Mouse-ear cress) protein is WPP domain-containing protein 3 (WPP3).